Here is a 457-residue protein sequence, read N- to C-terminus: Na(+)/H(+) antiporter NhaA (457 aa).

Transmembrane regions (helical) follow at residues 33-53 (ASGI…NSPL), 76-96 (FSLA…VVGM), 114-134 (LLPL…FLAF), 142-162 (AGWG…LTLL), 172-192 (VFVT…IALF), 196-216 (GLQL…ALMS), 235-255 (YALH…GLAI), 308-328 (FVHA…ALAN), 349-369 (TALA…WIAV), 385-405 (LIGV…IAGL), and 419-439 (VGIL…LRLT).

Belongs to the NhaA Na(+)/H(+) (TC 2.A.33) antiporter family.

The protein localises to the cell inner membrane. The catalysed reaction is Na(+)(in) + 2 H(+)(out) = Na(+)(out) + 2 H(+)(in). Its function is as follows. Na(+)/H(+) antiporter that extrudes sodium in exchange for external protons. The protein is Na(+)/H(+) antiporter NhaA of Anaeromyxobacter sp. (strain Fw109-5).